The following is an 882-amino-acid chain: Alanine--tRNA ligase (882 aa).

Zn(2+) contacts are provided by histidine 568, histidine 572, cysteine 670, and histidine 674.

It belongs to the class-II aminoacyl-tRNA synthetase family. The cofactor is Zn(2+).

Its subcellular location is the cytoplasm. The enzyme catalyses tRNA(Ala) + L-alanine + ATP = L-alanyl-tRNA(Ala) + AMP + diphosphate. Catalyzes the attachment of alanine to tRNA(Ala) in a two-step reaction: alanine is first activated by ATP to form Ala-AMP and then transferred to the acceptor end of tRNA(Ala). Also edits incorrectly charged Ser-tRNA(Ala) and Gly-tRNA(Ala) via its editing domain. This Syntrophotalea carbinolica (strain DSM 2380 / NBRC 103641 / GraBd1) (Pelobacter carbinolicus) protein is Alanine--tRNA ligase.